The following is a 1358-amino-acid chain: Probable serine/threonine-protein kinase ifkB (1358 aa).

The region spanning 1-582 is the Protein kinase domain; sequence MIGKGGFGVV…TKQLLESGLL (582 aa). Residues 2-10 and lysine 25 contribute to the ATP site; that span reads IGKGGFGVV. A disordered region spans residues 125–359; the sequence is GANNTAGGGD…SSSRKKPPKE (235 aa). Positions 136-148 are enriched in polar residues; that stretch reads VSNANSNKSMIVG. Over residues 149 to 196 the composition is skewed to low complexity; that stretch reads NNNKKLTLSSSNTSSSSSLLSNNKSKILNTSKSTSTNTSTSTSTSNTN. Residues 197 to 208 are compositionally biased toward basic residues; the sequence is KNKKISKKKKSK. The segment covering 258-285 has biased composition (low complexity); it reads NNNNDSNNNYHSDNESDSFSGSISMSDG. Positions 306-333 are enriched in acidic residues; the sequence is DDNENDDDDEEDDDDEYDEEDDDYETFD. Over residues 342–351 the composition is skewed to low complexity; sequence SNNSKLSTSS. The Proton acceptor role is filled by aspartate 413. Disordered stretches follow at residues 445–470 and 1148–1204; these read DDLN…TAQQ and GSGG…QQTS. A compositionally biased stretch (low complexity) spans 447–466; it reads LNSSTSNAANNINLSSSTNS. The span at 1148–1172 shows a compositional bias: gly residues; the sequence is GSGGSGGSGGGSSMSSGGGGGGNSN. Low complexity predominate over residues 1185–1199; the sequence is SNQSTSSSGNSNNSN.

The protein belongs to the protein kinase superfamily. Ser/Thr protein kinase family. GCN2 subfamily.

The enzyme catalyses L-seryl-[protein] + ATP = O-phospho-L-seryl-[protein] + ADP + H(+). The catalysed reaction is L-threonyl-[protein] + ATP = O-phospho-L-threonyl-[protein] + ADP + H(+). This is Probable serine/threonine-protein kinase ifkB (ifkB) from Dictyostelium discoideum (Social amoeba).